Here is a 385-residue protein sequence, read N- to C-terminus: Acetate kinase (385 aa).

Mg(2+) is bound at residue Asn9. Residue Lys16 coordinates ATP. Arg87 lines the substrate pocket. Asp144 (proton donor/acceptor) is an active-site residue. Residues 202-206 (HLGSG) and 277-279 (DMR) each bind ATP. Glu373 contacts Mg(2+).

This sequence belongs to the acetokinase family. Homodimer. Mg(2+) serves as cofactor. Requires Mn(2+) as cofactor.

The protein resides in the cytoplasm. The catalysed reaction is acetate + ATP = acetyl phosphate + ADP. It participates in metabolic intermediate biosynthesis; acetyl-CoA biosynthesis; acetyl-CoA from acetate: step 1/2. Catalyzes the formation of acetyl phosphate from acetate and ATP. Can also catalyze the reverse reaction. The polypeptide is Acetate kinase (Rickettsia typhi (strain ATCC VR-144 / Wilmington)).